The chain runs to 298 residues: ATP synthase gamma chain (298 aa).

Belongs to the ATPase gamma chain family. In terms of assembly, F-type ATPases have 2 components, CF(1) - the catalytic core - and CF(0) - the membrane proton channel. CF(1) has five subunits: alpha(3), beta(3), gamma(1), delta(1), epsilon(1). CF(0) has three main subunits: a, b and c.

It localises to the cell inner membrane. In terms of biological role, produces ATP from ADP in the presence of a proton gradient across the membrane. The gamma chain is believed to be important in regulating ATPase activity and the flow of protons through the CF(0) complex. The chain is ATP synthase gamma chain from Bacteroides thetaiotaomicron (strain ATCC 29148 / DSM 2079 / JCM 5827 / CCUG 10774 / NCTC 10582 / VPI-5482 / E50).